The chain runs to 762 residues: 5-methyltetrahydropteroyltriglutamate--homocysteine methyltransferase (762 aa).

Residues R17–K20 and K111 each bind 5-methyltetrahydropteroyltri-L-glutamate. L-homocysteine is bound by residues I435–S437 and E488. Residues I435–S437 and E488 each bind L-methionine. 5-methyltetrahydropteroyltri-L-glutamate is bound by residues R519 to C520 and W565. D603 contributes to the L-homocysteine binding site. D603 provides a ligand contact to L-methionine. Residue E609 coordinates 5-methyltetrahydropteroyltri-L-glutamate. 3 residues coordinate Zn(2+): H645, C647, and E669. Residue H698 is the Proton donor of the active site. Residue C730 participates in Zn(2+) binding.

Belongs to the vitamin-B12 independent methionine synthase family. Requires Zn(2+) as cofactor.

The enzyme catalyses 5-methyltetrahydropteroyltri-L-glutamate + L-homocysteine = tetrahydropteroyltri-L-glutamate + L-methionine. The protein operates within amino-acid biosynthesis; L-methionine biosynthesis via de novo pathway; L-methionine from L-homocysteine (MetE route): step 1/1. Catalyzes the transfer of a methyl group from 5-methyltetrahydrofolate to homocysteine resulting in methionine formation. The chain is 5-methyltetrahydropteroyltriglutamate--homocysteine methyltransferase from Bacillus cereus (strain ZK / E33L).